The sequence spans 96 residues: MQIRPLHDRVIVKRLEEERKTASGIVIPDSAAEKPDQGEIIAVGKGKVGDDGNVRPLEVKVGDKVLFGKYSGQTVKISGEELLVMREEDIMGVVEG.

This sequence belongs to the GroES chaperonin family. In terms of assembly, heptamer of 7 subunits arranged in a ring. Interacts with the chaperonin GroEL.

The protein localises to the cytoplasm. Together with the chaperonin GroEL, plays an essential role in assisting protein folding. The GroEL-GroES system forms a nano-cage that allows encapsulation of the non-native substrate proteins and provides a physical environment optimized to promote and accelerate protein folding. GroES binds to the apical surface of the GroEL ring, thereby capping the opening of the GroEL channel. The polypeptide is Co-chaperonin GroES (Nitrosospira multiformis (strain ATCC 25196 / NCIMB 11849 / C 71)).